The primary structure comprises 800 residues: DEP domain-containing protein 1A (800 aa).

The region spanning 24–108 (FRAGMPLKKH…DNSQLYRFPS (85 aa)) is the DEP domain. Disordered regions lie at residues 147–173 (ETLE…RSRE), 306–326 (SQPG…AKNP), and 459–485 (INTS…ARAR). The region spanning 281 to 321 (PLLTYQYYELFVNILVMCGYITTPKSQPGKRKNQEEPNCPQ) is the Rho-GAP domain. Residues 459–468 (INTSGSSVSS) show a composition bias toward low complexity.

The polypeptide is DEP domain-containing protein 1A (depdc1a) (Danio rerio (Zebrafish)).